We begin with the raw amino-acid sequence, 151 residues long: Small ribosomal subunit protein uS9 (151 aa).

This sequence belongs to the universal ribosomal protein uS9 family.

The chain is Small ribosomal subunit protein uS9 (rps9) from Aeropyrum pernix (strain ATCC 700893 / DSM 11879 / JCM 9820 / NBRC 100138 / K1).